Here is a 282-residue protein sequence, read N- to C-terminus: 4-diphosphocytidyl-2-C-methyl-D-erythritol kinase (282 aa).

K13 is a catalytic residue. 96–106 (PMGGGIGGGSS) serves as a coordination point for ATP. D138 is an active-site residue.

It belongs to the GHMP kinase family. IspE subfamily.

The enzyme catalyses 4-CDP-2-C-methyl-D-erythritol + ATP = 4-CDP-2-C-methyl-D-erythritol 2-phosphate + ADP + H(+). It participates in isoprenoid biosynthesis; isopentenyl diphosphate biosynthesis via DXP pathway; isopentenyl diphosphate from 1-deoxy-D-xylulose 5-phosphate: step 3/6. Its function is as follows. Catalyzes the phosphorylation of the position 2 hydroxy group of 4-diphosphocytidyl-2C-methyl-D-erythritol. The chain is 4-diphosphocytidyl-2-C-methyl-D-erythritol kinase from Pseudomonas syringae pv. tomato (strain ATCC BAA-871 / DC3000).